A 321-amino-acid polypeptide reads, in one-letter code: Ferredoxin--NADP reductase (321 aa).

The FAD site is built by aspartate 28, glutamine 36, tyrosine 41, alanine 81, phenylalanine 115, aspartate 274, and serine 315.

The protein belongs to the ferredoxin--NADP reductase type 2 family. As to quaternary structure, homodimer. FAD is required as a cofactor.

It catalyses the reaction 2 reduced [2Fe-2S]-[ferredoxin] + NADP(+) + H(+) = 2 oxidized [2Fe-2S]-[ferredoxin] + NADPH. This Frankia casuarinae (strain DSM 45818 / CECT 9043 / HFP020203 / CcI3) protein is Ferredoxin--NADP reductase.